The primary structure comprises 455 residues: Adenylyltransferase and sulfurtransferase MOCS3 (455 aa).

Residues glycine 90, aspartate 111, serine 118–arginine 122, lysine 135, and aspartate 179–asparagine 180 each bind ATP. The tract at residues alanine 156 to asparagine 236 is interaction with NFS1. Residues cysteine 220 and cysteine 223 each contribute to the Zn(2+) site. Cysteine 237 (glycyl thioester intermediate; for adenylyltransferase activity) is an active-site residue. The Zn(2+) site is built by cysteine 295 and cysteine 298. A disulfide bridge connects residues cysteine 314 and cysteine 322. Positions serine 345–proline 453 constitute a Rhodanese domain. The active-site Cysteine persulfide intermediate; for sulfurtransferase activity is cysteine 410. Cysteine 410 carries the post-translational modification Cysteine persulfide.

It in the N-terminal section; belongs to the HesA/MoeB/ThiF family. UBA4 subfamily. As to quaternary structure, interacts with NFS1. Zn(2+) serves as cofactor.

The protein resides in the cytoplasm. It is found in the cytosol. The catalysed reaction is [molybdopterin-synthase sulfur-carrier protein]-C-terminal Gly-Gly + ATP + H(+) = [molybdopterin-synthase sulfur-carrier protein]-C-terminal Gly-Gly-AMP + diphosphate. It carries out the reaction [molybdopterin-synthase sulfur-carrier protein]-C-terminal Gly-Gly-AMP + S-sulfanyl-L-cysteinyl-[cysteine desulfurase] + AH2 = [molybdopterin-synthase sulfur-carrier protein]-C-terminal-Gly-aminoethanethioate + L-cysteinyl-[cysteine desulfurase] + A + AMP + 2 H(+). The protein operates within tRNA modification; 5-methoxycarbonylmethyl-2-thiouridine-tRNA biosynthesis. It participates in cofactor biosynthesis; molybdopterin biosynthesis. Functionally, plays a central role in 2-thiolation of mcm(5)S(2)U at tRNA wobble positions of cytosolic tRNA(Lys), tRNA(Glu) and tRNA(Gln). Also essential during biosynthesis of the molybdenum cofactor. Acts by mediating the C-terminal thiocarboxylation of sulfur carriers URM1 and MOCS2A. Its N-terminus first activates URM1 and MOCS2A as acyl-adenylates (-COAMP), then the persulfide sulfur on the catalytic cysteine is transferred to URM1 and MOCS2A to form thiocarboxylation (-COSH) of their C-terminus. The reaction probably involves hydrogen sulfide that is generated from the persulfide intermediate and that acts as a nucleophile towards URM1 and MOCS2A. Subsequently, a transient disulfide bond is formed. Does not use thiosulfate as sulfur donor; NFS1 acting as a sulfur donor for thiocarboxylation reactions. The sequence is that of Adenylyltransferase and sulfurtransferase MOCS3 from Sus scrofa (Pig).